We begin with the raw amino-acid sequence, 183 residues long: RFKKIRRLGALPGLTSKRPRSGSDLKNQLRSGKRSQYRIRLEEKQKLRFHYGLTERQLLKYVHIAGKAKGSTGQILLQLLEMRLDNILFRLGMASTIPGARQLVNHRHILVNGRIVDIPSYRCKPRDIITTKNKQRSKALIQNFIASSPHQEELPNHLTIDPLQYKGLVNQIIDSKWIGLKIN.

Residues 82–143 (MRLDNILFRL…KQRSKALIQN (62 aa)) enclose the S4 RNA-binding domain.

It belongs to the universal ribosomal protein uS4 family. Part of the 30S ribosomal subunit. Contacts protein S5. The interaction surface between S4 and S5 is involved in control of translational fidelity.

It localises to the plastid. It is found in the chloroplast. Its function is as follows. One of the primary rRNA binding proteins, it binds directly to 16S rRNA where it nucleates assembly of the body of the 30S subunit. In terms of biological role, with S5 and S12 plays an important role in translational accuracy. The sequence is that of Small ribosomal subunit protein uS4c (rps4) from Sparaxis sp. (strain Lejeune 1997).